The primary structure comprises 517 residues: tRNA-2-methylthio-N(6)-dimethylallyladenosine synthase (517 aa).

The MTTase N-terminal domain maps to 18 to 137; it reads RTYQVRTYGC…LPTLLDRARH (120 aa). [4Fe-4S] cluster-binding residues include cysteine 27, cysteine 66, cysteine 100, cysteine 174, cysteine 178, and cysteine 181. The Radical SAM core domain occupies 160-397; the sequence is RESDYAAWVS…ELQEQICMEE (238 aa). The 72-residue stretch at 399–470 folds into the TRAM domain; it reads RVLIGRIVEL…PHHLIADAGI (72 aa).

This sequence belongs to the methylthiotransferase family. MiaB subfamily. In terms of assembly, monomer. [4Fe-4S] cluster serves as cofactor.

It is found in the cytoplasm. It catalyses the reaction N(6)-dimethylallyladenosine(37) in tRNA + (sulfur carrier)-SH + AH2 + 2 S-adenosyl-L-methionine = 2-methylsulfanyl-N(6)-dimethylallyladenosine(37) in tRNA + (sulfur carrier)-H + 5'-deoxyadenosine + L-methionine + A + S-adenosyl-L-homocysteine + 2 H(+). Its function is as follows. Catalyzes the methylthiolation of N6-(dimethylallyl)adenosine (i(6)A), leading to the formation of 2-methylthio-N6-(dimethylallyl)adenosine (ms(2)i(6)A) at position 37 in tRNAs that read codons beginning with uridine. The protein is tRNA-2-methylthio-N(6)-dimethylallyladenosine synthase of Mycobacterium leprae (strain TN).